We begin with the raw amino-acid sequence, 308 residues long: Ycf92-like protein (308 aa).

A run of 5 helical transmembrane segments spans residues 41–61 (FANNLWRILLVALLILFTLIA), 75–95 (LLTLSFFVLAIAAISPDGLGV), 153–173 (ISTIIFTVIYSTNLYLLTTAP), 192–212 (IPVTEITLTLTLSLRFIPLVL), and 288–308 (WLAIASLTIFWGIRVVFGNQI).

The protein belongs to the ycf92 family.

Its subcellular location is the membrane. The protein is Ycf92-like protein of Nostoc sp. (strain PCC 7120 / SAG 25.82 / UTEX 2576).